A 66-amino-acid polypeptide reads, in one-letter code: Beta-mammal toxin Co2 (66 aa).

In terms of domain architecture, LCN-type CS-alpha/beta spans 1–66 (KEGYIVNYHD…VWPLPKKRCN (66 aa)). Disulfide bonds link C12–C65, C16–C41, C25–C46, and C29–C48.

In terms of tissue distribution, expressed by the venom gland.

Its subcellular location is the secreted. Beta toxins bind voltage-independently at site-4 of sodium channels (Nav) and shift the voltage of activation toward more negative potentials thereby affecting sodium channel activation and promoting spontaneous and repetitive firing. This toxin acts on human Nav1.1/SCN1A, Nav1.2/SCN2A, Nav1.4/SCN4A and Nav1.6/SCN8A voltage-gated sodium channels. Also, it reduces the peak of sodium currents in Nav1.5/SCN5A at all potentials. In vivo, is lethal to mice when intraperitoneally injected at a dose of 5ug. No activity is observed when injected into crickets or woodlice. This Centruroides ornatus (Scorpion) protein is Beta-mammal toxin Co2.